A 393-amino-acid chain; its full sequence is 5-amino-6-(D-ribitylamino)uracil--L-tyrosine 4-hydroxyphenyl transferase (393 aa).

Positions 71-318 constitute a Radical SAM core domain; that stretch reads VTYVINRNIN…TAVSRIFLGN (248 aa). Residues Cys85, Cys89, and Cys92 each contribute to the [4Fe-4S] cluster site.

The protein belongs to the radical SAM superfamily. CofH family. Consists of two subunits, CofG and CofH. It depends on [4Fe-4S] cluster as a cofactor.

The enzyme catalyses 5-amino-6-(D-ribitylamino)uracil + L-tyrosine + S-adenosyl-L-methionine = 5-amino-5-(4-hydroxybenzyl)-6-(D-ribitylimino)-5,6-dihydrouracil + 2-iminoacetate + 5'-deoxyadenosine + L-methionine + H(+). It participates in cofactor biosynthesis; coenzyme F0 biosynthesis. Its function is as follows. Catalyzes the radical-mediated synthesis of 5-amino-5-(4-hydroxybenzyl)-6-(D-ribitylimino)-5,6-dihydrouracil from 5-amino-6-(D-ribitylamino)uracil and L-tyrosine. This Trichodesmium erythraeum (strain IMS101) protein is 5-amino-6-(D-ribitylamino)uracil--L-tyrosine 4-hydroxyphenyl transferase.